We begin with the raw amino-acid sequence, 349 residues long: Ferredoxin--NADP reductase (349 aa).

The FAD site is built by Asp-35, Gln-43, Tyr-48, Val-88, Phe-123, Asp-288, and Thr-329.

The protein belongs to the ferredoxin--NADP reductase type 2 family. Homodimer. Requires FAD as cofactor.

It catalyses the reaction 2 reduced [2Fe-2S]-[ferredoxin] + NADP(+) + H(+) = 2 oxidized [2Fe-2S]-[ferredoxin] + NADPH. The polypeptide is Ferredoxin--NADP reductase (Colwellia psychrerythraea (strain 34H / ATCC BAA-681) (Vibrio psychroerythus)).